Here is a 426-residue protein sequence, read N- to C-terminus: Proline--tRNA ligase (426 aa).

Belongs to the class-II aminoacyl-tRNA synthetase family. ProS type 2 subfamily. In terms of assembly, homodimer.

The protein localises to the cytoplasm. The enzyme catalyses tRNA(Pro) + L-proline + ATP = L-prolyl-tRNA(Pro) + AMP + diphosphate. Its function is as follows. Catalyzes the attachment of proline to tRNA(Pro) in a two-step reaction: proline is first activated by ATP to form Pro-AMP and then transferred to the acceptor end of tRNA(Pro). The polypeptide is Proline--tRNA ligase (Rickettsia rickettsii (strain Iowa)).